The sequence spans 74 residues: Translational regulator CsrA (74 aa).

The protein belongs to the CsrA/RsmA family. Homodimer. The beta-strands of each monomer intercalate to form a hydrophobic core while the alpha-helices form wings that extend away from the core. Two molecules of FliW interact with 1 homodimer. mRNA and FliW bind to different sites on CsrA.

The protein resides in the cytoplasm. Its function is as follows. A translational regulator that binds mRNA to regulate translation initiation and/or mRNA stability. Usually binds in the 5'-UTR at or near the Shine-Dalgarno sequence preventing ribosome-binding, thus repressing translation. Represses expression of flagellin (hag) in a post-transcriptional fashion. Specifically binds to 2 sites in the 5'-UTR of hag mRNA in a cooperative fashion; the second site overlaps the Shine-Dalgarno sequence and prevents 30S ribosomal subunit binding. Mutation of either binding site abolishes CsrA regulation of hag expression. Repression is greater in the 1A96 than 168 genetic background and higher in minimal than rich medium. Translation repression is antagonized by FliW. Partner switching by flagellin between FliW and CsrA provides a flagellar assembly checkpoint to tightly control the timing of flagellin synthesis. Flagellin binds to assembly factor FliW, freeing CsrA to repress translation of the flagellin mRNA. When the flagellar hook is assembled flagellin is secreted, depleting intracellular flagellin, which frees FliW to interact with CsrA and inhibits CsrA binding to mRNA. This derepresses flagellin translation and provides protein for flagellar assembly. Once the flagellar filament is completed cytoplasmic flagellin levels rise and CsrA translation repression of flagellin reinitiates. Overexpression leads to a dramatic reduction in motility, a significant reduction in flagellin synthesis and reduced flagella assembly. The chain is Translational regulator CsrA from Bacillus subtilis (strain 168).